A 649-amino-acid polypeptide reads, in one-letter code: Drebrin (649 aa).

A2 is modified (N-acetylalanine). The 132-residue stretch at 3 to 134 (GVSFSGHRLE…DAGAIGQRLS (132 aa)) folds into the ADF-H domain. S141 and S142 each carry phosphoserine. 2 stretches are compositionally biased toward basic and acidic residues: residues 208-236 (QERM…EEHR) and 288-298 (DNPREFFKQQE). 3 disordered regions span residues 208–420 (QERM…PAED), 477–502 (DLWP…PSGT), and 538–620 (EPPA…PPPV). Residues T331 and T335 each carry the phosphothreonine modification. Positions 334–348 (PTRSPSDSSTASTPV) are enriched in polar residues. Phosphoserine occurs at positions 337, 339, and 345. At T346 the chain carries Phosphothreonine. Residues 363–374 (QPPPLPPPPPPA) show a composition bias toward pro residues. At S416 the chain carries Phosphoserine. Position 497 is a phosphothreonine (T497). A compositionally biased stretch (polar residues) spans 582 to 594 (NGETTQKEGTQAS). The residue at position 601 (S601) is a Phosphoserine.

In terms of assembly, interacts with RUFY3. Interacts with CXCR4; this interaction is enhanced by antigenic stimulation. Interacts (via ADF-H domain) with ZMYND8 (via N-terminus); the interaction leads to sequestering of ZMYND8 in the cytoplasm. Expressed in the brain, with expression in the molecular layer of the dentate gyrus, stratum pyramidale, and stratum radiatum of the hippocampus (at protein level). Also expressed in the terminal varicosities distributed along dendritic trees of pyramidal cells in CA4 and CA3 of the hippocampus (at protein level). Expressed in pyramidal cells in CA2, CA1 and the subiculum of the hippocampus (at protein level). Expressed in peripheral blood lymphocytes, including T-cells (at protein level). Expressed in the brain. Expressed in the heart, placenta, lung, skeletal muscle, kidney, pancreas, skin fibroblasts, gingival fibroblasts and bone-derived cells.

The protein localises to the cytoplasm. The protein resides in the cell projection. It localises to the dendrite. It is found in the cell cortex. Its subcellular location is the cell junction. The protein localises to the growth cone. In terms of biological role, actin cytoskeleton-organizing protein that plays a role in the formation of cell projections. Required for actin polymerization at immunological synapses (IS) and for the recruitment of the chemokine receptor CXCR4 to IS. Plays a role in dendritic spine morphogenesis and organization, including the localization of the dopamine receptor DRD1 to the dendritic spines. Involved in memory-related synaptic plasticity in the hippocampus. The polypeptide is Drebrin (DBN1) (Homo sapiens (Human)).